A 27-amino-acid chain; its full sequence is Flagellar filament 34 kDa core protein (27 aa).

Belongs to the bacterial flagellin family. The flagellum consists of an outer layer composed of repeating units of FlaA around a core that contains one or all of five antigenically related polypeptides.

The protein localises to the periplasmic flagellum. The protein resides in the periplasm. Its function is as follows. Component of the core of the flagella. The chain is Flagellar filament 34 kDa core protein from Spirochaeta aurantia.